A 308-amino-acid chain; its full sequence is D-alanine--D-alanine ligase B (308 aa).

The ATP-grasp domain occupies Lys102–Glu302. Residue Pro128–Thr183 coordinates ATP. The Mg(2+) site is built by Asp252, Glu269, and Asn271.

This sequence belongs to the D-alanine--D-alanine ligase family. It depends on Mg(2+) as a cofactor. Mn(2+) serves as cofactor.

The protein resides in the cytoplasm. It carries out the reaction 2 D-alanine + ATP = D-alanyl-D-alanine + ADP + phosphate + H(+). It functions in the pathway cell wall biogenesis; peptidoglycan biosynthesis. In terms of biological role, cell wall formation. The chain is D-alanine--D-alanine ligase B from Brucella suis biovar 1 (strain 1330).